The primary structure comprises 47 residues: Protein RL9A (47 aa).

Residues 27–47 (CMIIVIMIAISIWILTYVLFL) form a helical membrane-spanning segment.

Its subcellular location is the host membrane. The sequence is that of Protein RL9A (RL9A) from Human cytomegalovirus (strain Merlin) (HHV-5).